The sequence spans 240 residues: UDP-2,3-diacylglucosamine hydrolase (240 aa).

5 residues coordinate Mn(2+): Asp8, His10, Asp41, Asn78, and His113. 78–79 serves as a coordination point for substrate; sequence NR. Residues Asp121, Ser159, Asn163, Lys166, and His194 each coordinate substrate. 2 residues coordinate Mn(2+): His194 and His196.

This sequence belongs to the LpxH family. Requires Mn(2+) as cofactor.

The protein resides in the cell inner membrane. The catalysed reaction is UDP-2-N,3-O-bis[(3R)-3-hydroxytetradecanoyl]-alpha-D-glucosamine + H2O = 2-N,3-O-bis[(3R)-3-hydroxytetradecanoyl]-alpha-D-glucosaminyl 1-phosphate + UMP + 2 H(+). It participates in glycolipid biosynthesis; lipid IV(A) biosynthesis; lipid IV(A) from (3R)-3-hydroxytetradecanoyl-[acyl-carrier-protein] and UDP-N-acetyl-alpha-D-glucosamine: step 4/6. Hydrolyzes the pyrophosphate bond of UDP-2,3-diacylglucosamine to yield 2,3-diacylglucosamine 1-phosphate (lipid X) and UMP by catalyzing the attack of water at the alpha-P atom. Involved in the biosynthesis of lipid A, a phosphorylated glycolipid that anchors the lipopolysaccharide to the outer membrane of the cell. The sequence is that of UDP-2,3-diacylglucosamine hydrolase from Shewanella baltica (strain OS185).